Reading from the N-terminus, the 243-residue chain is NEDD4-binding protein 2-like 1 (243 aa).

A disordered region spans residues 1–38 (MEDSFLQSFGRLSLQPQQQQQRQRPPRPPPRGTPPRRH).

Interacts with dynactin subunit proteins, including DCTN4, DCTN5 and DCTN5.

Functionally, might play a role in adipocyte differentiation and triglyceride accumulation. The protein is NEDD4-binding protein 2-like 1 (N4BP2L1) of Homo sapiens (Human).